The primary structure comprises 147 residues: Transmembrane protein 210 (147 aa).

An N-terminal signal peptide occupies residues 1–31 (MAPGPWPVSCLRGGPLGLTYLSLLLIPAAAG). The Extracellular segment spans residues 32–47 (TYCECSLGLSREALIA). The helical transmembrane segment at 48 to 68 (LLVVLAGISASCFCALVIVAI) threads the bilayer. Over 69–147 (GVLRAKGETC…PPPPPPLPPE (79 aa)) the chain is Cytoplasmic. A disordered region spans residues 128 to 147 (AIPMEASSEEPPPPPPLPPE). Over residues 137–147 (EPPPPPPLPPE) the composition is skewed to pro residues.

It localises to the membrane. The protein localises to the cytoplasmic vesicle. Its subcellular location is the secretory vesicle. It is found in the acrosome. The protein is Transmembrane protein 210 (TMEM210) of Homo sapiens (Human).